The sequence spans 490 residues: Glutamyl-tRNA(Gln) amidotransferase subunit A (490 aa).

Active-site charge relay system residues include K76 and S151. The active-site Acyl-ester intermediate is S175.

Belongs to the amidase family. GatA subfamily. Heterotrimer of A, B and C subunits.

The catalysed reaction is L-glutamyl-tRNA(Gln) + L-glutamine + ATP + H2O = L-glutaminyl-tRNA(Gln) + L-glutamate + ADP + phosphate + H(+). Functionally, allows the formation of correctly charged Gln-tRNA(Gln) through the transamidation of misacylated Glu-tRNA(Gln) in organisms which lack glutaminyl-tRNA synthetase. The reaction takes place in the presence of glutamine and ATP through an activated gamma-phospho-Glu-tRNA(Gln). The polypeptide is Glutamyl-tRNA(Gln) amidotransferase subunit A (Methylobacillus flagellatus (strain ATCC 51484 / DSM 6875 / VKM B-1610 / KT)).